The following is a 375-amino-acid chain: MAAAMASHVSTARSPALSFSSSSSSFFPGTTLRRFSAVSLPSPALPRLRVSCQASSVTSPSSPSDVKGKSDLKDFLAIDDFDTATIKTILDKASEVKALLKSGERNYLPFKGKSMSMIFAKPSMRTRVSFETGFFLLGGHALYLGPNDIQMGKREETRDVARVLSRYNDIIMARVFAHQDILDLANYSSVPVVNGLTDHNHPCQIMADALTMIEHIGQVEGTKVVYVGDGNNMVHSWLELASVIPFHFVCACPKGYEPDKERVSKAKQAGLSKIEITNDPKEAVIGADVVYSDVWASMGQKDEAEARRKAFQGFQVDEALMKLAGQKAYFMHCLPAERGVEVTNGVVEAPYSIVFPQAENRMHAQNAIMLHLLGF.

A chloroplast-targeting transit peptide spans 1-53 (MAAAMASHVSTARSPALSFSSSSSSFFPGTTLRRFSAVSLPSPALPRLRVSCQ). Residue alanine 54 is modified to N-acetylalanine. Residues 123 to 126 (SMRT), arginine 174, histidine 201, and glutamine 204 contribute to the carbamoyl phosphate site. L-ornithine contacts are provided by asparagine 232, aspartate 293, serine 297, and methionine 298. Residue cysteine 333 is the Proton acceptor of the active site. Carbamoyl phosphate is bound by residues 333 to 334 (CL) and arginine 361.

The protein belongs to the aspartate/ornithine carbamoyltransferase superfamily. OTCase family.

Its subcellular location is the plastid. The protein resides in the chloroplast. It carries out the reaction carbamoyl phosphate + L-ornithine = L-citrulline + phosphate + H(+). This chain is Ornithine transcarbamylase, chloroplastic (OTC), found in Arabidopsis thaliana (Mouse-ear cress).